Here is a 96-residue protein sequence, read N- to C-terminus: UPF0213 protein BCE_0033 (96 aa).

The region spanning asparagine 4–glutamate 79 is the GIY-YIG domain.

This sequence belongs to the UPF0213 family.

The sequence is that of UPF0213 protein BCE_0033 from Bacillus cereus (strain ATCC 10987 / NRS 248).